A 300-amino-acid chain; its full sequence is Hairy/enhancer-of-split related with YRPW motif protein 1 (300 aa).

The tract at residues 1-52 is disordered; sequence MKRGHDYSSSDSELDENIEVEKESADENGNLSSAAGSMSPSTSSQILARKRR. The segment covering 32-44 has biased composition (low complexity); that stretch reads SSAAGSMSPSTSS. Residues 48–103 enclose the bHLH domain; that stretch reads ARKRRRGIIEKRRRDRINNSLSELRRLVPSAFEKQGSAKLEKAEILQMTVDHLKML. The region spanning 121–157 is the Orange domain; the sequence is YRSLGFRECLAEVARYLSIIEGMDTTDPLRVRLVSHL. Residues 199-210 are compositionally biased toward low complexity; the sequence is AHTSANSTSSST. 2 disordered regions span residues 199 to 232 and 278 to 300; these read AHTS…LRVP and LSPT…IGAF. The short motif at 290–293 is the YRPW motif element; the sequence is YRPW.

It belongs to the HEY family. Efficient DNA binding requires dimerization with another bHLH protein. Binds DNA in the form of homodimer or more strongly as a heterodimer with hes1/hairy1 or hes4/hairy2b. Also weakly interacts with the bHLH proteins hes2, neurod1 and neurod4/ath3. Interacts (via Orange domain) with ccdc89/boip (via C-terminus).

The protein resides in the nucleus. Its function is as follows. Downstream effector of Notch signaling. Transcriptional repressor which binds preferentially to the canonical E box sequence 5'-CACGTG-3'. Acts as a suppressor of neurogenesis by antagonizing proneural gene function. Functions during floorplate development. Plays a role in pronephros formation in the inhibition of distal tubule and duct cell fates and the promotion of glomus and proximal tubule formation. The polypeptide is Hairy/enhancer-of-split related with YRPW motif protein 1 (hey1) (Xenopus tropicalis (Western clawed frog)).